We begin with the raw amino-acid sequence, 345 residues long: MTSGAWLVARPAAIEIAALLFAFTLGYLVKYTINYQSVVSQAIDHYGYGYERTSHEGIGGSNGKIPDCPYSYVISLYGHNHFSPLVDFLHPTLKHKYPKKHSLILDIMDAVHLCLIMVDDICDHSPKRKNHTTAHLLYGSCETANRAYFVLTKVINRAMKEQPVLGIELLRALELILEGQDMSLVWRRDGLRSFESYGEESLLTYKNMALLKTGTLFVLLGRLLNQGGHQSDDLLGRFGWYAQLQNDCKNIYSEEYAFNKGTVAEDLRNRELSFPVVVALNDKHTEPQIRKAFQSQNQGDIKRALQALESPSVKNTCLKTLQEAGQGLENLVAVWGRKEQMHFTK.

Residue His-112 coordinates substrate. Mg(2+) contacts are provided by Asp-119 and Asp-123. Arg-128 is a binding site for substrate. A glycan (N-linked (GlcNAc...) asparagine) is linked at Asn-130. Residues Lys-212, Thr-213, Gln-243, Asn-250, and Lys-260 each contribute to the substrate site.

It belongs to the FPP/GGPP synthase family. The cofactor is Mg(2+).

The protein operates within secondary metabolite biosynthesis. Its function is as follows. Prenyltransferase; part of the gene cluster that mediates the biosynthesis of lolitrems, indole-diterpene mycotoxins that are potent tremorgens in mammals, and are synthesized by clavicipitaceous fungal endophytes in association with their grass hosts. The geranylgeranyl diphosphate (GGPP) synthase ltmG is proposed to catalyze the first step in lolitrem biosynthesis. LtmG catalyzes a series of iterative condensations of isopentenyl diphosphate (IPP) with dimethylallyl diphosphate (DMAPP), geranyl diphosphate (GPP), and farnesyl diphosphate (FPP), to form GGPP. GGPP then condenses with indole-3-glycerol phosphate to form 3-geranylgeranylindole, an acyclic intermediate, to be incorporated into paxilline. Either ltmG or ltmC could be responsible for this step, as both are putative prenyl transferases. The FAD-dependent monooxygenase ltmM then catalyzes the epoxidation of the two terminal alkenes of the geranylgeranyl moiety, which is subsequently cyclized by ltmB, to paspaline. The cytochrome P450 monooxygenases ltmQ and ltmP can sequentially oxidize paspaline to terpendole E and terpendole F. Alternatively, ltmP converts paspaline to an intermediate which is oxidized by ltmQ to terpendole F. LtmF, ltmK, ltmE and ltmJ appear to be unique to the epichloe endophytes. The prenyltransferase ltmF is involved in the 27-hydroxyl-O-prenylation. The cytochrome P450 monooxygenase ltmK is required for the oxidative acetal ring formation. The multi-functional prenyltransferase ltmE is required for C20- and C21-prenylations of the indole ring of paspalanes and acts together with the cytochrome P450 monooxygenase ltmJ to yield lolitremanes by multiple oxidations and ring closures. The stereoisomer pairs of lolitriol and lolitrem N or lolitrem B and lolitrem F may be attributed to variations in the way in which ring closure can occur under the action of ltmJ. While the major product of this pathway is lolitrem B, the prenyl transferases and cytochrome P450 monooxygenases identified in this pathway have a remarkable versatility in their regio- and stereo-specificities to generate a diverse range of metabolites that are products of a metabolic grid rather than a linear pathway. The protein is Prenyltransferase ltmC of Epichloe festucae var. lolii (Neotyphodium lolii).